The following is a 180-amino-acid chain: MLSSPVNLPKWLEENSHLLKPPINNYCVYNDDFTVMIVGGPNARTDYHINQTPEWFYQYKGAMMLKVVDDGNFRDIIIREGEMFLLPGNTPHNPVRFADTVGIVLEQKRPADTIDRMRWYCQNCKEIVHEASFHCTDLGTQIKAAVEAFKGNEQLRTCKKCGVLADWSPKPGSIQDPNVQ.

R44 contacts O2. Residues H48, E54, and H92 each contribute to the Fe cation site. Position 54 (E54) interacts with substrate. Substrate-binding residues include R96 and E106. 4 residues coordinate a divalent metal cation: C121, C124, C158, and C161.

It belongs to the 3-HAO family. Requires Fe(2+) as cofactor.

The protein resides in the cytoplasm. It carries out the reaction 3-hydroxyanthranilate + O2 = (2Z,4Z)-2-amino-3-carboxymuconate 6-semialdehyde. Its pathway is cofactor biosynthesis; NAD(+) biosynthesis; quinolinate from L-kynurenine: step 3/3. Catalyzes the oxidative ring opening of 3-hydroxyanthranilate to 2-amino-3-carboxymuconate semialdehyde, which spontaneously cyclizes to quinolinate. The polypeptide is 3-hydroxyanthranilate 3,4-dioxygenase (bna1) (Neurospora crassa (strain ATCC 24698 / 74-OR23-1A / CBS 708.71 / DSM 1257 / FGSC 987)).